A 207-amino-acid polypeptide reads, in one-letter code: MKVVAFERSLQGTGASRRLRNSGKTPGIVYGAGAETQLVELDHNALWHALKKEVFHSSILDLEVAGKSQQVLLRDVQYHPFRQLVLHVDFQRVDAKKKLHTKVPLHFLNQETNPAVKLSSAVISHVINEIEIECLPSALPEFLEVDLATIEAGHSVHAKDIKLPAGVTLVAHVEAENPVIAAATIPAGAIAEGEAAAAEGEGETPAA.

Belongs to the bacterial ribosomal protein bL25 family. CTC subfamily. In terms of assembly, part of the 50S ribosomal subunit; part of the 5S rRNA/L5/L18/L25 subcomplex. Contacts the 5S rRNA. Binds to the 5S rRNA independently of L5 and L18.

In terms of biological role, this is one of the proteins that binds to the 5S RNA in the ribosome where it forms part of the central protuberance. In Paraburkholderia xenovorans (strain LB400), this protein is Large ribosomal subunit protein bL25.